Consider the following 596-residue polypeptide: DNA primase (596 aa).

Residues 41 to 65 (CPFHHEKTPSFSVSQDKQIYKCFGC) form a CHC2-type zinc finger. The 82-residue stretch at 255-336 (DTIIIVEGYM…DIKIIKIPDG (82 aa)) folds into the Toprim domain. Residues glutamate 261, aspartate 305, and aspartate 307 each contribute to the Mg(2+) site.

It belongs to the DnaG primase family. As to quaternary structure, monomer. Interacts with DnaB. Requires Zn(2+) as cofactor. The cofactor is Mg(2+).

The catalysed reaction is ssDNA + n NTP = ssDNA/pppN(pN)n-1 hybrid + (n-1) diphosphate.. Its function is as follows. RNA polymerase that catalyzes the synthesis of short RNA molecules used as primers for DNA polymerase during DNA replication. This is DNA primase from Clostridium acetobutylicum (strain ATCC 824 / DSM 792 / JCM 1419 / IAM 19013 / LMG 5710 / NBRC 13948 / NRRL B-527 / VKM B-1787 / 2291 / W).